The following is a 206-amino-acid chain: Probable nicotinate-nucleotide adenylyltransferase (206 aa).

The protein belongs to the NadD family.

The catalysed reaction is nicotinate beta-D-ribonucleotide + ATP + H(+) = deamido-NAD(+) + diphosphate. It participates in cofactor biosynthesis; NAD(+) biosynthesis; deamido-NAD(+) from nicotinate D-ribonucleotide: step 1/1. Functionally, catalyzes the reversible adenylation of nicotinate mononucleotide (NaMN) to nicotinic acid adenine dinucleotide (NaAD). The polypeptide is Probable nicotinate-nucleotide adenylyltransferase (Gloeobacter violaceus (strain ATCC 29082 / PCC 7421)).